Here is a 98-residue protein sequence, read N- to C-terminus: NADH-ubiquinone oxidoreductase chain 4L (98 aa).

The next 3 helical transmembrane spans lie at 1–21 (MSPI…GMLV), 26–46 (LMAS…MIAL), and 61–81 (IILL…LVSI).

Belongs to the complex I subunit 4L family. As to quaternary structure, core subunit of respiratory chain NADH dehydrogenase (Complex I) which is composed of 45 different subunits.

It localises to the mitochondrion inner membrane. The catalysed reaction is a ubiquinone + NADH + 5 H(+)(in) = a ubiquinol + NAD(+) + 4 H(+)(out). Its function is as follows. Core subunit of the mitochondrial membrane respiratory chain NADH dehydrogenase (Complex I) which catalyzes electron transfer from NADH through the respiratory chain, using ubiquinone as an electron acceptor. Part of the enzyme membrane arm which is embedded in the lipid bilayer and involved in proton translocation. The chain is NADH-ubiquinone oxidoreductase chain 4L (MT-ND4L) from Chlorocebus sabaeus (Green monkey).